The chain runs to 309 residues: tRNA dimethylallyltransferase (309 aa).

13-20 (GPTGAGKT) serves as a coordination point for ATP. 15-20 (TGAGKT) serves as a coordination point for substrate. Interaction with substrate tRNA regions lie at residues 38-41 (DSRQ) and 162-166 (QRVTR).

This sequence belongs to the IPP transferase family. In terms of assembly, monomer. Mg(2+) serves as cofactor.

The catalysed reaction is adenosine(37) in tRNA + dimethylallyl diphosphate = N(6)-dimethylallyladenosine(37) in tRNA + diphosphate. In terms of biological role, catalyzes the transfer of a dimethylallyl group onto the adenine at position 37 in tRNAs that read codons beginning with uridine, leading to the formation of N6-(dimethylallyl)adenosine (i(6)A). In Nitratidesulfovibrio vulgaris (strain ATCC 29579 / DSM 644 / CCUG 34227 / NCIMB 8303 / VKM B-1760 / Hildenborough) (Desulfovibrio vulgaris), this protein is tRNA dimethylallyltransferase.